A 321-amino-acid polypeptide reads, in one-letter code: AA9 family lytic polysaccharide monooxygenase D (321 aa).

The first 21 residues, 1 to 21, serve as a signal peptide directing secretion; the sequence is MRSTIVATFAAGLVVASLVAA. Histidine 22 is a Cu(2+) binding site. 2 disulfide bridges follow: cysteine 75-cysteine 192 and cysteine 116-cysteine 120. N-linked (GlcNAc...) asparagine glycosylation occurs at asparagine 78. Residue histidine 105 participates in Cu(2+) binding. Residue asparagine 152 is glycosylated (N-linked (GlcNAc...) asparagine). 2 residues coordinate O2: histidine 178 and glutamine 187. Tyrosine 189 contributes to the Cu(2+) binding site. Residue asparagine 266 is glycosylated (N-linked (GlcNAc...) asparagine).

This sequence belongs to the polysaccharide monooxygenase AA9 family. It depends on Cu(2+) as a cofactor.

It localises to the secreted. The catalysed reaction is [(1-&gt;4)-beta-D-glucosyl]n+m + reduced acceptor + O2 = 4-dehydro-beta-D-glucosyl-[(1-&gt;4)-beta-D-glucosyl]n-1 + [(1-&gt;4)-beta-D-glucosyl]m + acceptor + H2O.. Its function is as follows. Lytic polysaccharide monooxygenase (LPMO) that depolymerizes crystalline and amorphous polysaccharides via the oxidation of scissile alpha- or beta-(1-4)-glycosidic bonds, yielding C1 or C4 oxidation products. Catalysis by LPMOs requires the reduction of the active-site copper from Cu(II) to Cu(I) by a reducing agent and H(2)O(2) or O(2) as a cosubstrate. This chain is AA9 family lytic polysaccharide monooxygenase D, found in Geotrichum candidum (Oospora lactis).